The primary structure comprises 388 residues: tRNA (guanine(26)-N(2))-dimethyltransferase (388 aa).

Positions Lys-4–Ile-383 constitute a Trm1 methyltransferase domain. S-adenosyl-L-methionine contacts are provided by Arg-41, Arg-78, Asp-94, and Ala-123. Cys-251, Cys-254, Cys-271, and Cys-274 together coordinate Zn(2+).

This sequence belongs to the class I-like SAM-binding methyltransferase superfamily. Trm1 family.

The catalysed reaction is guanosine(26) in tRNA + 2 S-adenosyl-L-methionine = N(2)-dimethylguanosine(26) in tRNA + 2 S-adenosyl-L-homocysteine + 2 H(+). Its function is as follows. Dimethylates a single guanine residue at position 26 of a number of tRNAs using S-adenosyl-L-methionine as donor of the methyl groups. The chain is tRNA (guanine(26)-N(2))-dimethyltransferase from Methanosarcina barkeri (strain Fusaro / DSM 804).